We begin with the raw amino-acid sequence, 193 residues long: dTTP/UTP pyrophosphatase (193 aa).

Residue Asp-73 is the Proton acceptor of the active site.

This sequence belongs to the Maf family. YhdE subfamily. It depends on a divalent metal cation as a cofactor.

It localises to the cytoplasm. The catalysed reaction is dTTP + H2O = dTMP + diphosphate + H(+). The enzyme catalyses UTP + H2O = UMP + diphosphate + H(+). Nucleoside triphosphate pyrophosphatase that hydrolyzes dTTP and UTP. May have a dual role in cell division arrest and in preventing the incorporation of modified nucleotides into cellular nucleic acids. This is dTTP/UTP pyrophosphatase from Caulobacter vibrioides (strain ATCC 19089 / CIP 103742 / CB 15) (Caulobacter crescentus).